Reading from the N-terminus, the 297-residue chain is HTH-type transcriptional regulator ArgP (297 aa).

Residues 4–60 form the HTH lysR-type domain; the sequence is PDYRTLQALDAVIRERGFERAAQKLCITQSAVSQRIKQLENMFGQPLLVRTVPPRPT. The H-T-H motif DNA-binding region spans 21 to 40; the sequence is FERAAQKLCITQSAVSQRIK.

Belongs to the LysR transcriptional regulatory family. Homodimer.

Functionally, controls the transcription of genes involved in arginine and lysine metabolism. The polypeptide is HTH-type transcriptional regulator ArgP (Salmonella arizonae (strain ATCC BAA-731 / CDC346-86 / RSK2980)).